The following is a 225-amino-acid chain: Small ribosomal subunit protein uS2 (225 aa).

This sequence belongs to the universal ribosomal protein uS2 family.

The polypeptide is Small ribosomal subunit protein uS2 (Metallosphaera sedula (strain ATCC 51363 / DSM 5348 / JCM 9185 / NBRC 15509 / TH2)).